A 178-amino-acid polypeptide reads, in one-letter code: Photosystem I assembly protein Ycf4 (178 aa).

The next 2 membrane-spanning stretches (helical) occupy residues 19 to 39 and 61 to 81; these read ILVA…SLSS and LIMG…WAVI.

Belongs to the Ycf4 family.

The protein resides in the cellular thylakoid membrane. In terms of biological role, seems to be required for the assembly of the photosystem I complex. This Synechococcus sp. (strain CC9311) protein is Photosystem I assembly protein Ycf4.